The following is a 695-amino-acid chain: ATP-dependent zinc metalloprotease FtsH (695 aa).

The Cytoplasmic portion of the chain corresponds to 1–15; sequence MNNNKQPKQGNFVKN. A helical membrane pass occupies residues 16-36; sequence ILMWVILAIVVVVGFNFFFSS. Residues 37–139 are Extracellular-facing; that stretch reads NQSSVDKISY…QASSSGMWVQ (103 aa). A helical membrane pass occupies residues 140–160; sequence ILSYIIPMLLFVGIFWLMMGG. Residues 161–695 lie on the Cytoplasmic side of the membrane; it reads MGARGGGGGG…KEKSEDETAE (535 aa). 233–240 is an ATP binding site; sequence GPPGTGKT. Residue His-456 coordinates Zn(2+). The active site involves Glu-457. The Zn(2+) site is built by His-460 and Asp-532. Positions 657 to 695 are disordered; it reads KDANANVDDFSNINIYNGDEKTDSKPEENKEKSEDETAE. The span at 674 to 695 shows a compositional bias: basic and acidic residues; the sequence is GDEKTDSKPEENKEKSEDETAE.

It in the central section; belongs to the AAA ATPase family. This sequence in the C-terminal section; belongs to the peptidase M41 family. Homohexamer. Zn(2+) is required as a cofactor.

Its subcellular location is the cell membrane. Functionally, acts as a processive, ATP-dependent zinc metallopeptidase for both cytoplasmic and membrane proteins. Plays a role in the quality control of integral membrane proteins. In Lactococcus lactis subsp. lactis (strain IL1403) (Streptococcus lactis), this protein is ATP-dependent zinc metalloprotease FtsH.